A 288-amino-acid chain; its full sequence is Syntaxin-1A (288 aa).

Residues 1–265 are Cytoplasmic-facing; the sequence is MKDRTQELRT…KYQSKARRKK (265 aa). Ser-14, Ser-64, and Ser-95 each carry phosphoserine. Residues 68-109 adopt a coiled-coil conformation; the sequence is DEKTKEELEELMSDIKKTANKVRSKLKSIEQSIEQEEGLNRS. At Ser-188 the chain carries Phosphoserine; by DAPK1. Positions 192–254 constitute a t-SNARE coiled-coil homology domain; it reads LSEIETRHSE…ERAVSDTKKA (63 aa). Residues Lys-252, Lys-253, and Lys-256 each participate in a glycyl lysine isopeptide (Lys-Gly) (interchain with G-Cter in SUMO) cross-link. The chain crosses the membrane as a helical; Anchor for type IV membrane protein span at residues 266–286; the sequence is IMIIICCVILGIVIASTVGGI. Topologically, residues 287–288 are extracellular; it reads FA.

Belongs to the syntaxin family. Part of the SNARE core complex containing SNAP25, VAMP2 and STX1A; this complex constitutes the basic catalytic machinery of the complex neurotransmitter release apparatus. The SNARE complex interacts with CPLX1. Interacts with STXBP1. The interaction with STXBP1 promotes assembly of the SNARE complex. Interacts (via C-terminus) with KCNB1 (via C-terminus); the interaction increases in a calcium-dependent manner and induces a pore-independent enhancement of exocytosis in neuroendocrine cells, chromaffin cells, pancreatic beta cells and from the soma of dorsal root ganglia (DRG) neurons. Interacts with SYTL4. Interacts with STXBP6. Interacts with PLCL1 (via C2 domain). Interacts with OTOF. Interacts with LGI3. Interacts (via the H3 domain) with SLC6A4 (via the N-terminus); this interaction regulates SLC4A6 channel conductance in thalamocortical neurons. Interacts with SYT6 and SYT8; the interaction is Ca(2+)-dependent. Interacts with VAMP8. Interacts with SNAP23. Interacts with VAPA and SYBU. Interacts with PRRT2. Interacts with SEPT8. Interacts with STXBP5L. Interacts with synaptotagmin-1/SYT1. Interacts with SEPTIN5; in the cerebellar cortex. Interacts with SEPTIN4; in the striatum. Phosphorylated by CK2. Phosphorylation at Ser-188 by DAPK1 significantly decreases its interaction with STXBP1. Post-translationally, sumoylated, sumoylation is required for regulation of synaptic vesicle endocytosis. As to expression, highly expressed in embryonic spinal cord and ganglia and in adult cerebellum and cerebral cortex. In terms of tissue distribution, expressed in heart, liver, fat, skeletal muscle, kidney and brain.

The protein localises to the cytoplasmic vesicle. Its subcellular location is the secretory vesicle. The protein resides in the synaptic vesicle membrane. It localises to the synapse. It is found in the synaptosome. The protein localises to the cell membrane. Its subcellular location is the secreted. Functionally, plays an essential role in hormone and neurotransmitter calcium-dependent exocytosis and endocytosis. Part of the SNARE (Soluble NSF Attachment Receptor) complex composed of SNAP25, STX1A and VAMP2 which mediates the fusion of synaptic vesicles with the presynaptic plasma membrane. STX1A and SNAP25 are localized on the plasma membrane while VAMP2 resides in synaptic vesicles. The pairing of the three SNAREs from the N-terminal SNARE motifs to the C-terminal anchors leads to the formation of the SNARE complex, which brings membranes into close proximity and results in final fusion. Participates in the calcium-dependent regulation of acrosomal exocytosis in sperm. Also plays an important role in the exocytosis of hormones such as insulin or glucagon-like peptide 1 (GLP-1). The sequence is that of Syntaxin-1A (STX1A) from Homo sapiens (Human).